The sequence spans 373 residues: Thyroid hormone receptor beta-A (373 aa).

Residues 1–18 (MPSSMSGYIPSYLDKDEL) form a modulating region. NR C4-type zinc fingers lie at residues 19-39 (CVVC…CEGC) and 57-81 (CKYE…FKKC). A DNA-binding region (nuclear receptor) is located at residues 19 to 93 (CVVCGDKATG…VGMATDLVLD (75 aa)). One can recognise an NR LBD domain in the interval 129–373 (EEWELIQVVT…PPLFLEVFED (245 aa)).

This sequence belongs to the nuclear hormone receptor family. NR1 subfamily.

It localises to the nucleus. Its function is as follows. High affinity receptor for triiodothyronine (T3). The sequence is that of Thyroid hormone receptor beta-A (thrb-a) from Xenopus laevis (African clawed frog).